Consider the following 162-residue polypeptide: 2-C-methyl-D-erythritol 2,4-cyclodiphosphate synthase (162 aa).

A divalent metal cation is bound by residues Asp-10 and His-12. 4-CDP-2-C-methyl-D-erythritol 2-phosphate-binding positions include 10 to 12 (DVH) and 36 to 37 (HS). His-44 is a binding site for a divalent metal cation. Residues 58-60 (DIG), 63-67 (FPDTD), and Arg-144 each bind 4-CDP-2-C-methyl-D-erythritol 2-phosphate.

Belongs to the IspF family. Homotrimer. A divalent metal cation is required as a cofactor.

It carries out the reaction 4-CDP-2-C-methyl-D-erythritol 2-phosphate = 2-C-methyl-D-erythritol 2,4-cyclic diphosphate + CMP. It functions in the pathway isoprenoid biosynthesis; isopentenyl diphosphate biosynthesis via DXP pathway; isopentenyl diphosphate from 1-deoxy-D-xylulose 5-phosphate: step 4/6. Its function is as follows. Involved in the biosynthesis of isopentenyl diphosphate (IPP) and dimethylallyl diphosphate (DMAPP), two major building blocks of isoprenoid compounds. Catalyzes the conversion of 4-diphosphocytidyl-2-C-methyl-D-erythritol 2-phosphate (CDP-ME2P) to 2-C-methyl-D-erythritol 2,4-cyclodiphosphate (ME-CPP) with a corresponding release of cytidine 5-monophosphate (CMP). The polypeptide is 2-C-methyl-D-erythritol 2,4-cyclodiphosphate synthase (Laribacter hongkongensis (strain HLHK9)).